Reading from the N-terminus, the 458-residue chain is Bifunctional protein GlmU (458 aa).

Positions 1–224 (MTVIALAAGK…PKVAVGVNNQ (224 aa)) are pyrophosphorylase. UDP-N-acetyl-alpha-D-glucosamine contacts are provided by residues 6–9 (LAAG), Lys-20, Gln-71, and 76–77 (GT). Position 99 (Asp-99) interacts with Mg(2+). UDP-N-acetyl-alpha-D-glucosamine-binding residues include Gly-136, Glu-150, Asn-165, and Asn-222. Asn-222 contacts Mg(2+). The segment at 225–245 (LELARATRLLFKRKALRLMED) is linker. The N-acetyltransferase stretch occupies residues 246–458 (GVLMIDPRTV…TAETEEKEQV (213 aa)). Residues Arg-328 and Lys-346 each coordinate UDP-N-acetyl-alpha-D-glucosamine. His-358 functions as the Proton acceptor in the catalytic mechanism. Residues Tyr-361 and Asn-372 each contribute to the UDP-N-acetyl-alpha-D-glucosamine site. Acetyl-CoA-binding positions include 381 to 382 (NY), Ser-401, Ser-419, and Arg-436.

The protein in the N-terminal section; belongs to the N-acetylglucosamine-1-phosphate uridyltransferase family. In the C-terminal section; belongs to the transferase hexapeptide repeat family. As to quaternary structure, homotrimer. It depends on Mg(2+) as a cofactor.

The protein resides in the cytoplasm. It carries out the reaction alpha-D-glucosamine 1-phosphate + acetyl-CoA = N-acetyl-alpha-D-glucosamine 1-phosphate + CoA + H(+). The catalysed reaction is N-acetyl-alpha-D-glucosamine 1-phosphate + UTP + H(+) = UDP-N-acetyl-alpha-D-glucosamine + diphosphate. The protein operates within nucleotide-sugar biosynthesis; UDP-N-acetyl-alpha-D-glucosamine biosynthesis; N-acetyl-alpha-D-glucosamine 1-phosphate from alpha-D-glucosamine 6-phosphate (route II): step 2/2. It participates in nucleotide-sugar biosynthesis; UDP-N-acetyl-alpha-D-glucosamine biosynthesis; UDP-N-acetyl-alpha-D-glucosamine from N-acetyl-alpha-D-glucosamine 1-phosphate: step 1/1. Its pathway is bacterial outer membrane biogenesis; LPS lipid A biosynthesis. In terms of biological role, catalyzes the last two sequential reactions in the de novo biosynthetic pathway for UDP-N-acetylglucosamine (UDP-GlcNAc). The C-terminal domain catalyzes the transfer of acetyl group from acetyl coenzyme A to glucosamine-1-phosphate (GlcN-1-P) to produce N-acetylglucosamine-1-phosphate (GlcNAc-1-P), which is converted into UDP-GlcNAc by the transfer of uridine 5-monophosphate (from uridine 5-triphosphate), a reaction catalyzed by the N-terminal domain. In Bdellovibrio bacteriovorus (strain ATCC 15356 / DSM 50701 / NCIMB 9529 / HD100), this protein is Bifunctional protein GlmU.